A 274-amino-acid polypeptide reads, in one-letter code: Cytochrome b-c1 complex subunit Rieske, mitochondrial (274 aa).

The Mitochondrial matrix segment spans residues 79-110; sequence SHTDVKVPDFSDYRRAEVLDSTKSSKESSEAR. The helical transmembrane segment at 111-137 threads the bilayer; that stretch reads KGFSYLVTATTTVGVAYAAKNVVSQFV. Topologically, residues 138 to 274 are mitochondrial intermembrane; it reads SSMSASADVL…FTSDDVVVVG (137 aa). Residues 187–272 enclose the Rieske domain; it reads EAAVEVSQLR…YEFTSDDVVV (86 aa). [2Fe-2S] cluster is bound by residues cysteine 217, histidine 219, cysteine 236, histidine 239, and serine 241. Cysteine 222 and cysteine 238 form a disulfide bridge.

It belongs to the Rieske iron-sulfur protein family. Component of the ubiquinol-cytochrome c oxidoreductase (cytochrome b-c1 complex, complex III, CIII), a multisubunit enzyme composed of 11 subunits. The complex is composed of 3 respiratory subunits cytochrome b, cytochrome c1 and Rieske protein UQCRFS1, 2 core protein subunits UQCRC1/QCR1 and UQCRC2/QCR2, and 6 low-molecular weight protein subunits UQCRH/QCR6, UQCRB/QCR7, UQCRQ/QCR8, UQCR10/QCR9, UQCR11/QCR10 and subunit 9, the cleavage product of Rieske protein UQCRFS1. The complex exists as an obligatory dimer and forms supercomplexes (SCs) in the inner mitochondrial membrane with NADH-ubiquinone oxidoreductase (complex I, CI) and cytochrome c oxidase (complex IV, CIV), resulting in different assemblies (supercomplex SCI(1)III(2)IV(1) and megacomplex MCI(2)III(2)IV(2)). Incorporation of the Rieske protein UQCRFS1 is the penultimate step in complex III assembly. Interacts with TTC19, which is involved in the clearance of UQCRFS1 fragments. In terms of assembly, component of the ubiquinol-cytochrome c oxidoreductase (cytochrome b-c1 complex, complex III, CIII). Subunit 9 corresponds to the mitochondrial targeting sequence (MTS) of Rieske protein UQCRFS1. It is retained after processing and incorporated inside complex III, where it remains bound to the complex and localizes between the 2 core subunits UQCRC1/QCR1 and UQCRC2/QCR2. The cofactor is [2Fe-2S] cluster. In terms of processing, proteolytic processing is necessary for the correct insertion of UQCRFS1 in the complex III dimer. Several fragments are generated during UQCRFS1 insertion, most probably due to the endogenous matrix-processing peptidase (MPP) activity of the 2 core protein subunits UQCRC1/QCR1 and UQCRC2/QCR2, which are homologous to the 2 mitochondrial-processing peptidase (MPP) subunits beta-MPP and alpha-MPP respectively. The action of the protease is also necessary for the clearance of the UQCRFS1 fragments.

Its subcellular location is the mitochondrion inner membrane. It carries out the reaction a quinol + 2 Fe(III)-[cytochrome c](out) = a quinone + 2 Fe(II)-[cytochrome c](out) + 2 H(+)(out). Functionally, component of the ubiquinol-cytochrome c oxidoreductase, a multisubunit transmembrane complex that is part of the mitochondrial electron transport chain which drives oxidative phosphorylation. The respiratory chain contains 3 multisubunit complexes succinate dehydrogenase (complex II, CII), ubiquinol-cytochrome c oxidoreductase (cytochrome b-c1 complex, complex III, CIII) and cytochrome c oxidase (complex IV, CIV), that cooperate to transfer electrons derived from NADH and succinate to molecular oxygen, creating an electrochemical gradient over the inner membrane that drives transmembrane transport and the ATP synthase. The cytochrome b-c1 complex catalyzes electron transfer from ubiquinol to cytochrome c, linking this redox reaction to translocation of protons across the mitochondrial inner membrane, with protons being carried across the membrane as hydrogens on the quinol. In the process called Q cycle, 2 protons are consumed from the matrix, 4 protons are released into the intermembrane space and 2 electrons are passed to cytochrome c. The Rieske protein is a catalytic core subunit containing a [2Fe-2S] iron-sulfur cluster. It cycles between 2 conformational states during catalysis to transfer electrons from the quinol bound in the Q(0) site in cytochrome b to cytochrome c1. Incorporation of UQCRFS1 is the penultimate step in complex III assembly. Its function is as follows. Component of the ubiquinol-cytochrome c oxidoreductase (cytochrome b-c1 complex, complex III, CIII). UQCRFS1 undergoes proteolytic processing once it is incorporated in the complex III dimer. One of the fragments, called subunit 9, corresponds to its mitochondrial targeting sequence (MTS). The proteolytic processing is necessary for the correct insertion of UQCRFS1 in the complex III dimer, but the persistence of UQCRFS1-derived fragments may prevent newly imported UQCRFS1 to be processed and assembled into complex III and is detrimental for the complex III structure and function. The protein is Cytochrome b-c1 complex subunit Rieske, mitochondrial of Mus musculus (Mouse).